We begin with the raw amino-acid sequence, 450 residues long: ATP-dependent protease ATPase subunit HslU (450 aa).

ATP is bound by residues Val29, 71 to 76 (GVGKTE), Asp261, Glu328, and Arg400.

It belongs to the ClpX chaperone family. HslU subfamily. As to quaternary structure, a double ring-shaped homohexamer of HslV is capped on each side by a ring-shaped HslU homohexamer. The assembly of the HslU/HslV complex is dependent on binding of ATP.

The protein localises to the cytoplasm. Functionally, ATPase subunit of a proteasome-like degradation complex; this subunit has chaperone activity. The binding of ATP and its subsequent hydrolysis by HslU are essential for unfolding of protein substrates subsequently hydrolyzed by HslV. HslU recognizes the N-terminal part of its protein substrates and unfolds these before they are guided to HslV for hydrolysis. The polypeptide is ATP-dependent protease ATPase subunit HslU (Rickettsia rickettsii (strain Iowa)).